We begin with the raw amino-acid sequence, 373 residues long: Flagellar P-ring protein (373 aa).

The signal sequence occupies residues 1–26 (MRLLFRFLTLVAVLAMSLADVAPAWA).

This sequence belongs to the FlgI family. The basal body constitutes a major portion of the flagellar organelle and consists of four rings (L,P,S, and M) mounted on a central rod.

It is found in the periplasm. It localises to the bacterial flagellum basal body. Functionally, assembles around the rod to form the L-ring and probably protects the motor/basal body from shearing forces during rotation. This Rhizobium etli (strain CIAT 652) protein is Flagellar P-ring protein.